The sequence spans 381 residues: Succinyl-diaminopimelate desuccinylase (381 aa).

His-72 provides a ligand contact to Zn(2+). Residue Asp-74 is part of the active site. Position 105 (Asp-105) interacts with Zn(2+). Glu-139 (proton acceptor) is an active-site residue. Zn(2+) is bound by residues Glu-140, Glu-168, and His-354.

Belongs to the peptidase M20A family. DapE subfamily. As to quaternary structure, homodimer. Zn(2+) is required as a cofactor. Co(2+) serves as cofactor.

It carries out the reaction N-succinyl-(2S,6S)-2,6-diaminopimelate + H2O = (2S,6S)-2,6-diaminopimelate + succinate. It participates in amino-acid biosynthesis; L-lysine biosynthesis via DAP pathway; LL-2,6-diaminopimelate from (S)-tetrahydrodipicolinate (succinylase route): step 3/3. Its function is as follows. Catalyzes the hydrolysis of N-succinyl-L,L-diaminopimelic acid (SDAP), forming succinate and LL-2,6-diaminopimelate (DAP), an intermediate involved in the bacterial biosynthesis of lysine and meso-diaminopimelic acid, an essential component of bacterial cell walls. This chain is Succinyl-diaminopimelate desuccinylase, found in Shewanella sp. (strain ANA-3).